A 338-amino-acid chain; its full sequence is MARDEVRRILPADIKREVVVKDEKAETNPKWGFPPEKRPIEMHIQFGIINLDKPPGPTSHEVVAWVKRILNLNKAGHGGTLDPKVSGVLPVALERATRVVQALLPAGKEYVALMHLHGDVPEDKILAVMREFQGEIIQRPPLRSAVKRRLRTRKVYYIDVLEIEGRDVLFRVGVEAGTYIRSLIHHIGLALGVGAHMAELRRTRSGPFKEDETLVTLHDLVDYYHFWKEDGVEEYFRKAIQPMEKAVEHLPKVWIRDSAVAAVTHGADLAVPGVVKLHKGIKKGDLVAIMTLKDELVALGKAMMTTGEMLQKSKGIAVDVDKVFMPRDWYPKLWKEKE.

Asp-82 acts as the Nucleophile in catalysis. The PUA domain occupies 250 to 325; that stretch reads LPKVWIRDSA…IAVDVDKVFM (76 aa).

The protein belongs to the pseudouridine synthase TruB family. Type 2 subfamily.

The catalysed reaction is uridine(55) in tRNA = pseudouridine(55) in tRNA. Could be responsible for synthesis of pseudouridine from uracil-55 in the psi GC loop of transfer RNAs. The protein is Probable tRNA pseudouridine synthase B of Thermococcus kodakarensis (strain ATCC BAA-918 / JCM 12380 / KOD1) (Pyrococcus kodakaraensis (strain KOD1)).